The chain runs to 271 residues: Formamidopyrimidine-DNA glycosylase (271 aa).

Pro-2 functions as the Schiff-base intermediate with DNA in the catalytic mechanism. Glu-3 acts as the Proton donor in catalysis. The Proton donor; for beta-elimination activity role is filled by Lys-57. Residues His-90, Arg-109, and Lys-151 each contribute to the DNA site. The segment at 236 to 270 (HVYGRGGETCTSCGNLLSEIRLGQRTTVFCGICQT) adopts an FPG-type zinc-finger fold. Arg-260 serves as the catalytic Proton donor; for delta-elimination activity.

It belongs to the FPG family. As to quaternary structure, monomer. Zn(2+) serves as cofactor.

The catalysed reaction is Hydrolysis of DNA containing ring-opened 7-methylguanine residues, releasing 2,6-diamino-4-hydroxy-5-(N-methyl)formamidopyrimidine.. It catalyses the reaction 2'-deoxyribonucleotide-(2'-deoxyribose 5'-phosphate)-2'-deoxyribonucleotide-DNA = a 3'-end 2'-deoxyribonucleotide-(2,3-dehydro-2,3-deoxyribose 5'-phosphate)-DNA + a 5'-end 5'-phospho-2'-deoxyribonucleoside-DNA + H(+). Involved in base excision repair of DNA damaged by oxidation or by mutagenic agents. Acts as a DNA glycosylase that recognizes and removes damaged bases. Has a preference for oxidized purines, such as 7,8-dihydro-8-oxoguanine (8-oxoG). Has AP (apurinic/apyrimidinic) lyase activity and introduces nicks in the DNA strand. Cleaves the DNA backbone by beta-delta elimination to generate a single-strand break at the site of the removed base with both 3'- and 5'-phosphates. The chain is Formamidopyrimidine-DNA glycosylase from Shewanella sp. (strain W3-18-1).